An 825-amino-acid chain; its full sequence is 5E5 antigen (825 aa).

The segment at 126–825 is disordered; it reads LSRDGYETET…RPRPSPKSPR (700 aa). A compositionally biased stretch (pro residues) spans 157 to 180; it reads PRAPPEPPDPGAPRPPPDPGPLPL. The segment covering 191 to 200 has biased composition (polar residues); that stretch reads VQVSTEQLLM. Over residues 217–237 the composition is skewed to basic and acidic residues; it reads TRGDRTQEGGEKPREQREGPR. Residues 247–256 show a composition bias toward low complexity; that stretch reads QQEESPQQEP. Composition is skewed to basic and acidic residues over residues 257–277, 315–342, and 392–406; these read SSER…HEGE, VPKD…RDWT, and QERE…ESPR. Positions 437–449 are enriched in basic residues; that stretch reads RRPRKRRGRKGRM. Residues 455–477 show a composition bias toward low complexity; the sequence is TTATSASATGGPAEEAGASAPEG. The span at 485–505 shows a compositional bias: basic residues; that stretch reads GRARGPRQQARRRHGPQRRRG. Over residues 524–536 the composition is skewed to polar residues; it reads GTTSGEQRADQSQ. Over residues 537–562 the composition is skewed to low complexity; the sequence is TLPALAGAPTAHAHAVPGPGPAAATL. Basic residues predominate over residues 565 to 575; sequence RGRRGSWRGGR. Positions 576-588 are enriched in gly residues; that stretch reads RGGGAGASGGGRG. Residues 721 to 733 are compositionally biased toward pro residues; the sequence is FPPPPPTRPPPVL. Residues 734 to 750 are compositionally biased toward low complexity; it reads LPLLRLTCAGDPGASRP.

As to expression, expressed in neurons.

It localises to the nucleus. Its function is as follows. Might have DNA-binding ability. The protein is 5E5 antigen of Rattus norvegicus (Rat).